Here is a 600-residue protein sequence, read N- to C-terminus: DNA mismatch repair protein MutL (600 aa).

Residues 348 to 375 are disordered; that stretch reads QPQAQRPQTAWSAETSPFRPYQPTTGFS. The span at 349-362 shows a compositional bias: polar residues; it reads PQAQRPQTAWSAET.

The protein belongs to the DNA mismatch repair MutL/HexB family.

Its function is as follows. This protein is involved in the repair of mismatches in DNA. It is required for dam-dependent methyl-directed DNA mismatch repair. May act as a 'molecular matchmaker', a protein that promotes the formation of a stable complex between two or more DNA-binding proteins in an ATP-dependent manner without itself being part of a final effector complex. The protein is DNA mismatch repair protein MutL of Rhizobium leguminosarum bv. trifolii (strain WSM2304).